The primary structure comprises 210 residues: Somatotropin (210 aa).

Positions 1-22 (MGQVFLLMPVLLVSCFLSHGAA) are cleaved as a signal peptide. Residue histidine 38 participates in Zn(2+) binding. A disulfide bridge links cysteine 71 with cysteine 183. Glutamate 192 contributes to the Zn(2+) binding site. The cysteines at positions 200 and 208 are disulfide-linked.

This sequence belongs to the somatotropin/prolactin family.

The protein localises to the secreted. Functionally, growth hormone plays an important role in growth control and is involved in the regulation of several anabolic processes. Implicated as an osmoregulatory substance important for seawater adaptation. The chain is Somatotropin (gh) from Oncorhynchus masou (Cherry salmon).